The primary structure comprises 224 residues: Probable 2-phosphosulfolactate phosphatase (224 aa).

Belongs to the ComB family. The cofactor is Mg(2+).

It catalyses the reaction (2R)-O-phospho-3-sulfolactate + H2O = (2R)-3-sulfolactate + phosphate. The protein is Probable 2-phosphosulfolactate phosphatase of Pseudothermotoga lettingae (strain ATCC BAA-301 / DSM 14385 / NBRC 107922 / TMO) (Thermotoga lettingae).